The sequence spans 396 residues: Phosphoglycerate kinase (396 aa).

Substrate is bound by residues 21–23, Arg-36, 59–62, Arg-118, and Arg-151; these read DLN and HFDR. Residues Lys-201, Glu-323, and 353–356 contribute to the ATP site; that span reads GGDT.

It belongs to the phosphoglycerate kinase family. In terms of assembly, monomer.

Its subcellular location is the cytoplasm. It carries out the reaction (2R)-3-phosphoglycerate + ATP = (2R)-3-phospho-glyceroyl phosphate + ADP. The protein operates within carbohydrate degradation; glycolysis; pyruvate from D-glyceraldehyde 3-phosphate: step 2/5. This Granulibacter bethesdensis (strain ATCC BAA-1260 / CGDNIH1) protein is Phosphoglycerate kinase.